The sequence spans 375 residues: Zinc finger CCCH domain-containing protein 57 (375 aa).

C3H1-type zinc fingers lie at residues 42 to 70 (RHGEPDCAYYIRTGLCRFGSTCRFNHPHD), 87 to 115 (RIGQPECEFYLKTGTCKFGVTCKFHHPRN), 133 to 161 (RPNEDDCSYFLRIGQCKFGGTCKFNHPQT), 243 to 271 (RPGQPECQFYMKTGDCKFGTVCKFHHPRD), and 289 to 317 (RPGEPLCVFYSRYGICKFGPSCKFDHPMR). Residues 352–375 (SVEAKPTSLPETTSAKDTIVDAQH) form a disordered region.

It is found in the nucleus. The sequence is that of Zinc finger CCCH domain-containing protein 57 (ZFN3) from Arabidopsis thaliana (Mouse-ear cress).